The chain runs to 341 residues: THO complex subunit 6 (341 aa).

7 WD repeats span residues 22-61 (RLHM…SSEA), 74-112 (AHDG…GCKE), 124-165 (LEVP…RVLR), 166-205 (GHTD…EVQT), 215-254 (SRPH…PTTI), 256-293 (PIRA…KAQV), and 295-339 (GSSP…AFSL). Position 180 is a phosphoserine (S180).

The protein belongs to the WD repeat THOC6 family. Component of the THO subcomplex, which is composed of THOC1, THOC2, THOC3, THOC5, THOC6 and THOC7. The THO subcomplex interacts with DDX39B to form the THO-DDX39B complex which multimerizes into a 28-subunit tetrameric assembly. Component of the transcription/export (TREX) complex at least composed of ALYREF/THOC4, DDX39B, SARNP/CIP29, CHTOP and the THO subcomplex; in the complex interacts with THOC5; together with THOC5 and THOC7, plays a key structural role in the oligomerization of the THO-DDX39B complex. TREX seems to have a dynamic structure involving ATP-dependent remodeling.

The protein resides in the nucleus. The protein localises to the nucleus speckle. Its function is as follows. Component of the THO subcomplex of the TREX complex which is thought to couple mRNA transcription, processing and nuclear export, and which specifically associates with spliced mRNA and not with unspliced pre-mRNA. Plays a key structural role in the oligomerization of the THO-DDX39B complex. TREX is recruited to spliced mRNAs by a transcription-independent mechanism, binds to mRNA upstream of the exon-junction complex (EJC) and is recruited in a splicing- and cap-dependent manner to a region near the 5' end of the mRNA where it functions in mRNA export to the cytoplasm via the TAP/NXF1 pathway. Plays a role in apoptosis negative control involved in brain development. Functionally, (Microbial infection) The TREX complex is essential for the export of Kaposi's sarcoma-associated herpesvirus (KSHV) intronless mRNAs and infectious virus production. The chain is THO complex subunit 6 (THOC6) from Homo sapiens (Human).